The chain runs to 136 residues: D-ribose pyranase (136 aa).

The active-site Proton donor is the histidine 20. Residues aspartate 28, histidine 98, and 120–122 (YAN) each bind substrate.

Belongs to the RbsD / FucU family. RbsD subfamily. Homodecamer.

It localises to the cytoplasm. It carries out the reaction beta-D-ribopyranose = beta-D-ribofuranose. It participates in carbohydrate metabolism; D-ribose degradation; D-ribose 5-phosphate from beta-D-ribopyranose: step 1/2. In terms of biological role, catalyzes the interconversion of beta-pyran and beta-furan forms of D-ribose. The sequence is that of D-ribose pyranase from Geobacillus kaustophilus (strain HTA426).